Reading from the N-terminus, the 381-residue chain is 1-deoxy-D-xylulose 5-phosphate reductoisomerase (381 aa).

NADPH-binding residues include T10, G11, S12, I13, and N120. 1-deoxy-D-xylulose 5-phosphate is bound at residue K121. Position 122 (E122) interacts with NADPH. D146 is a Mn(2+) binding site. 1-deoxy-D-xylulose 5-phosphate-binding residues include S147, E148, S172, and H195. E148 is a binding site for Mn(2+). G201 is a binding site for NADPH. S208, N213, K214, and E217 together coordinate 1-deoxy-D-xylulose 5-phosphate. E217 is a Mn(2+) binding site.

This sequence belongs to the DXR family. Requires Mg(2+) as cofactor. It depends on Mn(2+) as a cofactor.

It carries out the reaction 2-C-methyl-D-erythritol 4-phosphate + NADP(+) = 1-deoxy-D-xylulose 5-phosphate + NADPH + H(+). It participates in isoprenoid biosynthesis; isopentenyl diphosphate biosynthesis via DXP pathway; isopentenyl diphosphate from 1-deoxy-D-xylulose 5-phosphate: step 1/6. Its function is as follows. Catalyzes the NADPH-dependent rearrangement and reduction of 1-deoxy-D-xylulose-5-phosphate (DXP) to 2-C-methyl-D-erythritol 4-phosphate (MEP). This chain is 1-deoxy-D-xylulose 5-phosphate reductoisomerase, found in Thermodesulfovibrio yellowstonii (strain ATCC 51303 / DSM 11347 / YP87).